The sequence spans 185 residues: Large ribosomal subunit protein uL6 (185 aa).

Belongs to the universal ribosomal protein uL6 family. In terms of assembly, part of the 50S ribosomal subunit.

Functionally, this protein binds to the 23S rRNA, and is important in its secondary structure. It is located near the subunit interface in the base of the L7/L12 stalk, and near the tRNA binding site of the peptidyltransferase center. The protein is Large ribosomal subunit protein uL6 of Staphylothermus marinus (strain ATCC 43588 / DSM 3639 / JCM 9404 / F1).